The primary structure comprises 99 residues: Protein translation factor SUI1 homolog (99 aa).

It belongs to the SUI1 family.

This Picrophilus torridus (strain ATCC 700027 / DSM 9790 / JCM 10055 / NBRC 100828 / KAW 2/3) protein is Protein translation factor SUI1 homolog.